A 600-amino-acid chain; its full sequence is CoA ligase FVEG_12633 (600 aa).

Residues 170 to 174 (TSGTT), H214, 321 to 323 (AAL), and 342 to 343 (ER) each bind ATP. The SBD1 stretch occupies residues 241–342 (NSVWTRLAAP…QLTGGNVLLE (102 aa)). Positions 343-420 (RYGMTEVGMA…LRGPTVFTGY (78 aa)) are SBD2. M346 is a substrate binding site. Residues T347, D441, R471, and K564 each contribute to the ATP site. K564 is an oxalate binding site.

The protein belongs to the ATP-dependent AMP-binding enzyme family.

Functionally, coA ligase; part of the Fusarium detoxification of benzoxazolinone cluster 2 (FDB2) involved in the degradation of benzoxazolinones produced by the host plant. Maize, wheat, and rye produce the 2 benzoxazinone phytoanticipins 2,4-dihy-droxy-7-methoxy-1,4-benzoxazin-3-one (DIMBOA) and 2,4-dihydroxy-1,4-benzoxazin-3-one (DIBOA) that, due to their inherent instability once released, spontaneously degrade to the more stable corresponding benzoxazolinones, 6-methoxy-2-benzoxazolinone (MBOA) and 2-benzoxazolinone (BOA), respectively. The first step in the detoxification of benzoxazolinones involves the hydrolysis of the cyclic ester bond of benzoxazolinones by the FDB1 cluster gamma-lactamase MBL1 to aminophenols. MBL1 is able to convert BOA into 2-aminophenol (2-AP), as well as MBOA into 5-methoxy-2-aminophenol (2-AMP). The FDB2 cluster N-malonyltransferase FDB2/NAT1 then metabolizes aminophenols via N-malonylation to non-toxic malonamic acids. FDB2/NAT1 converts 2-AP into N-(2-hydroxyphenyl) malonamic acid (HPMA) and 2-AMP into N-(2-hydroxy-4-methoxyphenyl) malonamic acid (HMPMA). The duplicated dienlactone hydrolases DLH1 and DLH2 may provide redundant function for hydrolyzing the lactone moiety in the BOA molecule. The roles of the amidases an other enzymes encoded by the 2 FDB clusters have not been identified so far. The protein is CoA ligase FVEG_12633 of Gibberella moniliformis (strain M3125 / FGSC 7600) (Maize ear and stalk rot fungus).